The sequence spans 1322 residues: Mediator of RNA polymerase II transcription subunit 12 (1322 aa).

A disordered region spans residues 1–21 (MSPSKYLLTPPEELHPLTDSN).

The protein belongs to the Mediator complex subunit 12 family. As to quaternary structure, component of the SRB8-11 complex, which itself associates with the Mediator complex.

The protein localises to the nucleus. Component of the SRB8-11 complex. The SRB8-11 complex is a regulatory module of the Mediator complex which is itself involved in regulation of basal and activated RNA polymerase II-dependent transcription. The SRB8-11 complex may be involved in the transcriptional repression of a subset of genes regulated by Mediator. It may inhibit the association of the Mediator complex with RNA polymerase II to form the holoenzyme complex. The sequence is that of Mediator of RNA polymerase II transcription subunit 12 (SRB8) from Kluyveromyces lactis (strain ATCC 8585 / CBS 2359 / DSM 70799 / NBRC 1267 / NRRL Y-1140 / WM37) (Yeast).